The sequence spans 551 residues: MSFDGFFLHHIVEELRSELVNGRIQKINQPFEQELVLQIRSNRQSHRLLLSAHPVFGRIQLTQTTFENPAQPSTFIMVLRKYLQGALIESIEQVENDRIVEMTVSNKNEIGDHIQATLIIEIMGKHSNILLVDKSSHKILEVIKHVGFSQNSYRTLLPGSTYIAPPSTESLNPFTIKDEKLFEILQTQELTAKNLQSLFQGLGRDTANELERILVSEKLSAFRNFFNQETKPCLTETSFSPVPFANQAGEPFANLSDLLDTYYKNKAERDRVKQQASELIRRVENELQKNRHKLKKQEKELLATDNAEEFRQKGELLTTFLHQVPNDQDQVILDNYYTNQPIMIALDKALTPNQNAQRYFKRYQKLKEAVKYLTDLIEETKATILYLESVETVLNQAGLEEIAEIREELIQTGFIRRRQREKIQKRKKLEQYLASDGKTIIYVGRNNLQNEELTFKMARKEELWFHAKDIPGSHVVISGNLDPSDAVKTDAAELAAYFSQGRLSNLVQVDMIEVKKLNKPTGGKPGFVTYTGQKTLRVTPDSKKIASMKKS.

The protein belongs to the NEMF family. Associates with stalled 50S ribosomal subunits, binds to RqcP. Interacts with human fibronectin.

It is found in the secreted. The protein localises to the capsule. The protein resides in the cell surface. Its subcellular location is the cytoplasm. Its function is as follows. Key component of the ribosome quality control system (RQC), a ribosome-associated complex that mediates the extraction of incompletely synthesized nascent chains from stalled ribosomes and their subsequent degradation. RqcH recruits Ala-charged tRNA, and with RqcP directs the elongation of stalled nascent chains on 50S ribosomal subunits, leading to non-templated C-terminal alanine extensions (Ala tail). The Ala tail promotes nascent chain degradation. May add between 1 and at least 8 Ala residues. Binds to stalled 50S ribosomal subunits. In terms of biological role, plays a significant role in virulence. Recombinant protein binds to immobilized human fibronectin; binding is saturable and competed by heparin. Purified protein inhibits binding of whole cells to fibronectin. The protein is Rqc2 homolog RqcH of Streptococcus pneumoniae serotype 2 (strain D39 / NCTC 7466).